The primary structure comprises 195 residues: GTP-dependent dephospho-CoA kinase (195 aa).

5 residues coordinate GTP: Asp-49, Val-50, Asp-68, Glu-127, and Asp-150.

The protein belongs to the GTP-dependent DPCK family.

The enzyme catalyses 3'-dephospho-CoA + GTP = GDP + CoA + H(+). It participates in cofactor biosynthesis; coenzyme A biosynthesis. Its function is as follows. Catalyzes the GTP-dependent phosphorylation of the 3'-hydroxyl group of dephosphocoenzyme A to form coenzyme A (CoA). The chain is GTP-dependent dephospho-CoA kinase from Methanosarcina acetivorans (strain ATCC 35395 / DSM 2834 / JCM 12185 / C2A).